Here is a 412-residue protein sequence, read N- to C-terminus: Aspartokinase (412 aa).

2 consecutive ACT domains span residues 266–340 (LTIR…GDTN) and 346–412 (IVGV…RQGE).

It belongs to the aspartokinase family.

It carries out the reaction L-aspartate + ATP = 4-phospho-L-aspartate + ADP. Its pathway is amino-acid biosynthesis; L-lysine biosynthesis via DAP pathway; (S)-tetrahydrodipicolinate from L-aspartate: step 1/4. The protein operates within amino-acid biosynthesis; L-methionine biosynthesis via de novo pathway; L-homoserine from L-aspartate: step 1/3. It functions in the pathway amino-acid biosynthesis; L-threonine biosynthesis; L-threonine from L-aspartate: step 1/5. The polypeptide is Aspartokinase (lysC) (Pseudomonas aeruginosa (strain ATCC 15692 / DSM 22644 / CIP 104116 / JCM 14847 / LMG 12228 / 1C / PRS 101 / PAO1)).